The sequence spans 129 residues: uncharacterized protein (129 aa).

Positions 1–129 (MGRMASPLRS…PARQSARMAR (129 aa)) are disordered. The span at 18 to 46 (ESTRHKETSTVRVETSSHREETSSHRVET) shows a compositional bias: basic and acidic residues. Positions 47 to 59 (SSRQVRTSSRQVE) are enriched in low complexity. The segment covering 70-97 (LTPSTKRLPQFLEVSSQHVETSSQCTET) has biased composition (polar residues).

This is an uncharacterized protein from Mus musculus (Mouse).